Reading from the N-terminus, the 437-residue chain is Acyl-coenzyme A thioesterase 2, chloroplastic (437 aa).

The N-terminal 13 residues, 1-13 (MDLSSSPNHPITV), are a transit peptide targeting the chloroplast. HotDog ACOT-type domains follow at residues 89-211 (ILYN…RDSK) and 287-404 (RDTR…RPEA).

This sequence belongs to the acyl coenzyme A hydrolase family. In terms of tissue distribution, mostly expressed at low levels in glandular trichomes (lupulin glands), and, to a lower extent, in stems, leaves, flowers and cones.

The protein localises to the plastid. It localises to the chloroplast. In terms of biological role, acyl-CoA thioesterases are a group of enzymes that catalyze the hydrolysis of acyl-CoAs to the free fatty acid and coenzyme A (CoASH), providing the potential to regulate intracellular levels of acyl-CoAs, free fatty acids and CoASH. The sequence is that of Acyl-coenzyme A thioesterase 2, chloroplastic from Humulus lupulus (European hop).